The chain runs to 488 residues: UDP-N-acetylmuramate--L-alanine ligase (488 aa).

Gly127–Thr133 serves as a coordination point for ATP.

Belongs to the MurCDEF family.

Its subcellular location is the cytoplasm. It carries out the reaction UDP-N-acetyl-alpha-D-muramate + L-alanine + ATP = UDP-N-acetyl-alpha-D-muramoyl-L-alanine + ADP + phosphate + H(+). The protein operates within cell wall biogenesis; peptidoglycan biosynthesis. Cell wall formation. The chain is UDP-N-acetylmuramate--L-alanine ligase from Shewanella baltica (strain OS223).